The primary structure comprises 137 residues: Small ribosomal subunit protein eS6 (137 aa).

Over residues 114–127 (LPVEEAPAEDAPES) the composition is skewed to acidic residues. Residues 114–137 (LPVEEAPAEDAPESAEEKSEDKKE) form a disordered region. A compositionally biased stretch (basic and acidic residues) spans 128-137 (AEEKSEDKKE).

It belongs to the eukaryotic ribosomal protein eS6 family.

In Nitrosopumilus maritimus (strain SCM1), this protein is Small ribosomal subunit protein eS6.